An 837-amino-acid chain; its full sequence is Striatin-interacting protein 1 (837 aa).

Methionine 1 is subject to N-acetylmethionine. Disordered regions lie at residues 1–67 and 333–423; these read MEPA…ESPD and AASP…KGLP. Residues 18–35 show a composition bias toward pro residues; sequence PQPPPPPPPAAAQPPPGA. Over residues 36 to 46 the composition is skewed to low complexity; the sequence is PRAAAGLLPGG. Basic and acidic residues predominate over residues 47-60; sequence KAREFNRNQRKDSE. Phosphoserine is present on residues serine 59, serine 335, and serine 339. Positions 356 to 377 are enriched in basic and acidic residues; that stretch reads KALIKQDNLDAFNERDPYKADD. Residues 378–391 are compositionally biased toward acidic residues; that stretch reads SREEEEENDDDNSL. Phosphoserine is present on serine 788. The required for STRIPAK core complex formation stretch occupies residues 796-837; the sequence is DNCLQSVLGQRVDLPEDFQMNYDLWLEREVFSKPISWEELLQ.

This sequence belongs to the STRIP family. Part of the core of STRIPAK complexes composed of PP2A catalytic and scaffolding subunits, the striatins (PP2A regulatory subunits), the striatin-associated proteins MOB4, STRIP1 and STRIP2, PDCD10 and members of the STE20 kinases, such as STK24 and STK26. The STRIPAK complex can be extended by adapter proteins such as SLMAP:SIKE1, CTTNBP2 or CTTNBP2NL. Interacts with CDC42BPB. Interacts with CTTNBP2NL.

It is found in the cytoplasm. In terms of biological role, plays a role in the regulation of cell morphology and cytoskeletal organization. Required in the cortical actin filament dynamics and cell shape. Part of the striatin-interacting phosphatase and kinase (STRIPAK) complexes. STRIPAK complexes have critical roles in protein (de)phosphorylation and are regulators of multiple signaling pathways including Hippo, MAPK, nuclear receptor and cytoskeleton remodeling. Different types of STRIPAK complexes are involved in a variety of biological processes such as cell growth, differentiation, apoptosis, metabolism and immune regulation. In Homo sapiens (Human), this protein is Striatin-interacting protein 1.